A 265-amino-acid chain; its full sequence is Apolipoprotein A-I (265 aa).

The first 18 residues, 1-18 (MKALVLTLAVLFFTGSQA), serve as a signal peptide directing secretion. 2 tandem repeats follow at residues 67–88 (LKLL…EQLG) and 89–110 (PVTQ…QEMN). The 10 X approximate tandem repeats stretch occupies residues 67-265 (LKLLDNWDSL…DEASKKLNAQ (199 aa)). The residue at position 109 (Met-109) is a Methionine sulfoxide. Residues 111 to 121 (KDLEEVKQKVQ) form a 3; half-length repeat. Repeat copies occupy residues 122–142 (PYLD…RQKV), 144–165 (PLGE…DKLT), 166–187 (PLAE…QQLA), 188–209 (PYSD…EGGG), and 210–230 (SLAE…EKAK). Residues 231–241 (PALEDLRQGLL) form a 9; half-length repeat. Repeat unit 10 spans residues 242 to 265 (PVLESLKVSILAAIDEASKKLNAQ).

The protein belongs to the apolipoprotein A1/A4/E family. As to quaternary structure, homodimer. Interacts with APOA1BP and CLU. Component of a sperm activating protein complex (SPAP), consisting of APOA1, an immunoglobulin heavy chain, an immunoglobulin light chain and albumin. Interacts with NDRG1. Interacts with SCGB3A2. Interacts with NAXE and YJEFN3. Glycosylated. In terms of processing, palmitoylated. Post-translationally, phosphorylation sites are present in the extracellular medium. As to expression, major protein of plasma HDL, also found in chylomicrons.

Its subcellular location is the secreted. In terms of biological role, participates in the reverse transport of cholesterol from tissues to the liver for excretion by promoting cholesterol efflux from tissues and by acting as a cofactor for the lecithin cholesterol acyltransferase (LCAT). As part of the SPAP complex, activates spermatozoa motility. This Physeter macrocephalus (Sperm whale) protein is Apolipoprotein A-I (APOA1).